The sequence spans 481 residues: MSTLCPPPSPAVAKTEIALSGKSPLLAATFAYWDNILGPRVRHIWAPKTEQVLLSDGEITFLANHTLNGEILRNAESGAIDVKFFVLSEKGVIIVSLIFDGNWNGDRSTYGLSIILPQTELSFYLPLHRVCVDRLTHIIRKGRIWMHKERQENVQKIILEGTERMEDQGQSIIPMLTGEVIPVMELLSSMKSHSVPEEIDIADTVLNDDDIGDSCHEGFLLNAISSHLQTCGCSVVVGSSAEKVNKIVRTLCLFLTPAERKCSRLCEAESSFKYESGLFVQGLLKDSTGSFVLPFRQVMYAPYPTTHIDVDVNTVKQMPPCHEHIYNQRRYMRSELTAFWRATSEEDMAQDTIIYTDESFTPDLNIFQDVLHRDTLVKAFLDQVFQLKPGLSLRSTFLAQFLLVLHRKALTLIKYIEDDTQKGKKPFKSLRNLKIDLDLTAEGDLNIIMALAEKIKPGLHSFIFGRPFYTSVQERDVLMTF.

A uDENN C9ORF72-type domain is found at serine 23–serine 194. A cDENN C9ORF72-type domain is found at aspartate 200–threonine 343. Positions valine 370–phenylalanine 464 constitute a dDENN C9ORF72-type domain. Residues serine 461–phenylalanine 481 are required for the homodimerization of the C9orf72-SMCR8 complex.

As to quaternary structure, component of the C9orf72-SMCR8 complex, at least composed of C9orf72, SMCR8 and WDR41. The complex is formed of two protomers, each individually consisting of one molecule each of C9orf72, SMCR8 and WDR41. The protomers homodimerize via an interaction between C9orf72 (via C-terminus) and SMCR8 (via N-terminus). Within each protomer SMCR8 (via DENN domain) acts as a bridging protein between WDR41 (via C-terminus and N-terminus) and C9orf72 (via C-terminus). The C9orf72-SMCR8 complex associates with the ULK1/ATG1 kinase complex. Interacts with ULK1/ATG1 kinase complex members ULK1, ATG13 and RB1CC1. Interacts with SMCR8; the interaction is direct. Interacts with HNRNPA1, HNRNPA2B1 and UBQLN2. Interacts with small Rab GTPase RAB1A; the interaction mediates recruitment of RAB1A to the ULK1/ATG1 kinase complex. Also interacts with small Rab GTPase RAB7A. Interacts with cofilin. Interacts with GTP-binding proteins ARF1 and ARF6. Interacts with the DLG4/PSD-95. Interacts with CARM1 (via PH domain-like fold). Interacts with RAB39A and RAB39B (in GDP-bound forms); functions as GEF for RAB39A and RAB39B. In terms of tissue distribution, both isoforms are widely expressed, including kidney, lung, liver, heart, testis and several brain regions, such as cerebellum. Also expressed in the frontal cortex and in lymphoblasts (at protein level).

The protein localises to the cytoplasm. It is found in the nucleus. It localises to the P-body. The protein resides in the stress granule. Its subcellular location is the endosome. The protein localises to the lysosome. It is found in the cytoplasmic vesicle. It localises to the autophagosome. The protein resides in the autolysosome. Its subcellular location is the secreted. The protein localises to the cell projection. It is found in the axon. It localises to the growth cone. The protein resides in the perikaryon. Its subcellular location is the dendrite. The protein localises to the presynapse. It is found in the postsynapse. It localises to the nucleus membrane. Its function is as follows. Acts as a guanine-nucleotide releasing factor (GEF) for Rab GTPases by promoting the conversion of inactive RAB-GDP to the active form RAB-GTP. Acts as a GEF for RAB39A which enables HOPS-mediated autophagosome-lysosome membrane tethering and fusion in mammalian autophagy. Component of the C9orf72-SMCR8 complex where both subunits display GEF activity and that regulates autophagy. As part of the C9orf72-SMCR8-WDR41 (CSW) complex, functions as GEF for RAB8A and RAB39B, thereby promoting autophagosome maturation. As part of the C9orf72-SMCR8 complex, also functions as GTPase activating protein (GAP) for RAB8A and RAB11A in vitro. The C9orf72-SMCR8 complex also acts as a regulator of autophagy initiation by interacting with the ULK1/ATG1 kinase complex and modulating its protein kinase activity. Promotes initiation of autophagy by regulating the RAB1A-dependent trafficking of the ULK1/ATG1 kinase complex to the phagophore which leads to autophagosome formation. Acts as a regulator of mTORC1 signaling by promoting phosphorylation of mTORC1 substrates. Plays a role in endosomal trafficking. May be involved in regulating the maturation of phagosomes to lysosomes. Promotes the lysosomal localization and lysosome-mediated degradation of CARM1 which leads to inhibition of starvation-induced lipid metabolism. Regulates actin dynamics in motor neurons by inhibiting the GTP-binding activity of ARF6, leading to ARF6 inactivation. This reduces the activity of the LIMK1 and LIMK2 kinases which are responsible for phosphorylation and inactivation of cofilin, leading to CFL1/cofilin activation. Positively regulates axon extension and axon growth cone size in spinal motor neurons. Required for SMCR8 protein expression and localization at pre- and post-synaptic compartments in the forebrain, also regulates protein abundance of RAB3A and GRIA1/GLUR1 in post-synaptic compartments in the forebrain and hippocampus. Plays a role within the hematopoietic system in restricting inflammation and the development of autoimmunity. In terms of biological role, regulates stress granule assembly in response to cellular stress. Does not play a role in regulation of stress granule assembly in response to cellular stress. This Homo sapiens (Human) protein is Guanine nucleotide exchange factor C9orf72.